Consider the following 264-residue polypeptide: Teichoic acids export ATP-binding protein TagH (264 aa).

Positions 24-243 constitute an ABC transporter domain; sequence IKDALIPKNK…YEAFLKTFKK (220 aa). ATP is bound at residue 57 to 64; the sequence is GINGSGKS.

Belongs to the ABC transporter superfamily. Teichoic acids exporter (TC 3.A.1.104.1) family. The complex is composed of two ATP-binding proteins (TagH) and two transmembrane proteins (TagG).

It localises to the cell membrane. It catalyses the reaction ATP + H2O + teichoic acidSide 1 = ADP + phosphate + teichoic acidSide 2.. Part of the ABC transporter complex TagGH involved in teichoic acids export. Responsible for energy coupling to the transport system. The protein is Teichoic acids export ATP-binding protein TagH of Staphylococcus epidermidis (strain ATCC 35984 / DSM 28319 / BCRC 17069 / CCUG 31568 / BM 3577 / RP62A).